Here is a 300-residue protein sequence, read N- to C-terminus: Sulfate adenylyltransferase subunit 2 (300 aa).

The segment at 281-300 (RAIDRDEAGSMEKKKREGYF) is disordered.

Belongs to the PAPS reductase family. CysD subfamily. In terms of assembly, heterodimer composed of CysD, the smaller subunit, and CysN.

It catalyses the reaction sulfate + ATP + H(+) = adenosine 5'-phosphosulfate + diphosphate. It participates in sulfur metabolism; hydrogen sulfide biosynthesis; sulfite from sulfate: step 1/3. With CysN forms the ATP sulfurylase (ATPS) that catalyzes the adenylation of sulfate producing adenosine 5'-phosphosulfate (APS) and diphosphate, the first enzymatic step in sulfur assimilation pathway. APS synthesis involves the formation of a high-energy phosphoric-sulfuric acid anhydride bond driven by GTP hydrolysis by CysN coupled to ATP hydrolysis by CysD. The sequence is that of Sulfate adenylyltransferase subunit 2 from Brucella melitensis biotype 2 (strain ATCC 23457).